We begin with the raw amino-acid sequence, 388 residues long: Chorismate synthase (388 aa).

Residues Arg39 and Arg45 each coordinate NADP(+). FMN is bound by residues 130–132 (RSS), 251–252 (NA), Gly296, 311–315 (KPIPT), and Arg337.

It belongs to the chorismate synthase family. In terms of assembly, homotetramer. FMNH2 is required as a cofactor.

The enzyme catalyses 5-O-(1-carboxyvinyl)-3-phosphoshikimate = chorismate + phosphate. It functions in the pathway metabolic intermediate biosynthesis; chorismate biosynthesis; chorismate from D-erythrose 4-phosphate and phosphoenolpyruvate: step 7/7. Functionally, catalyzes the anti-1,4-elimination of the C-3 phosphate and the C-6 proR hydrogen from 5-enolpyruvylshikimate-3-phosphate (EPSP) to yield chorismate, which is the branch point compound that serves as the starting substrate for the three terminal pathways of aromatic amino acid biosynthesis. This reaction introduces a second double bond into the aromatic ring system. The sequence is that of Chorismate synthase from Geobacillus thermodenitrificans (strain NG80-2).